The primary structure comprises 179 residues: MQEVIAGLERFTFAFEKDVEMQKGTGLLPFQGMDKSASAVCNFFTKGLCEKGKLCPFRHDRGEKMVVCKHWLRGLCKKGDHCKFLHQYDLTRMPECYFYSKFGDCSNKECSFLHVKPAFKSQDCPWYDQGFCKDGPLCKYRHVPRIMCLNYLVGFCPEGPKCQFAQKIREFKLLPGSKI.

5 consecutive C3H1-type zinc fingers follow at residues K35 to R61, G62 to D89, L90 to P117, A118 to R145, and I146 to R169.

This sequence belongs to the CPSF4/YTH1 family.

The chain is Putative cleavage and polyadenylation specificity factor subunit 4-like protein (CPSF4L) from Homo sapiens (Human).